We begin with the raw amino-acid sequence, 583 residues long: Inactive tyrosine-protein kinase RYK (583 aa).

The N-terminal stretch at 1-18 is a signal peptide; it reads MILRYLIFFAQLWALCLA. Over 19 to 173 the chain is Extracellular; that stretch reads NVNMFISKEE…EVDDTDSIDK (155 aa). Residues 22-147 form the WIF domain; that stretch reads MFISKEEMNR…KVKLRQEKIC (126 aa). N-linked (GlcNAc...) asparagine glycans are attached at residues Asn30 and Asn46. Residues Cys113 and Cys147 are joined by a disulfide bond. A helical membrane pass occupies residues 174 to 194; it reads AFFVIICIAAAFLLIVAATLI. Topologically, residues 195 to 583 are cytoplasmic; it reads CYFKRSKKED…DFNIQLSQYI (389 aa). Residues 281–583 form the Protein kinase domain; that stretch reads FQSLPLDMEG…DFNIQLSQYI (303 aa). ATP is bound by residues 287 to 295 and Lys327; that span reads DMEGTFGEV.

It belongs to the protein kinase superfamily. Tyr protein kinase family.

It is found in the cell membrane. It localises to the basolateral cell membrane. Has no detectable kinase activity in vitro and is unlikely to function as a tyrosine kinase in vivo. Receptor which may act as a receptor for Wnt ligand mom-2. Plays a role in controlling P7.p vulva precursor cell lineage orientation during vulva development. Regulates pop-1 asymmetric distribution in P7.p and its daughter cells. Plays a role in the migration of ALM neurons during embryogenesis. In Caenorhabditis elegans, this protein is Inactive tyrosine-protein kinase RYK.